A 343-amino-acid polypeptide reads, in one-letter code: Small ribosomal subunit biogenesis GTPase RsgA (343 aa).

In terms of domain architecture, CP-type G spans 116–275 (RGQLKPVAAN…LIDSPGIREF (160 aa)). Residues 163 to 166 (NKAD) and 217 to 225 (GQSGVGKSS) contribute to the GTP site. Residues Cys-299, Cys-304, His-306, and Cys-312 each coordinate Zn(2+).

It belongs to the TRAFAC class YlqF/YawG GTPase family. RsgA subfamily. As to quaternary structure, monomer. Associates with 30S ribosomal subunit, binds 16S rRNA. Zn(2+) is required as a cofactor.

It is found in the cytoplasm. Its function is as follows. One of several proteins that assist in the late maturation steps of the functional core of the 30S ribosomal subunit. Helps release RbfA from mature subunits. May play a role in the assembly of ribosomal proteins into the subunit. Circularly permuted GTPase that catalyzes slow GTP hydrolysis, GTPase activity is stimulated by the 30S ribosomal subunit. This chain is Small ribosomal subunit biogenesis GTPase RsgA, found in Pseudomonas fluorescens (strain ATCC BAA-477 / NRRL B-23932 / Pf-5).